The primary structure comprises 440 residues: Ribosomal protein uS12 methylthiotransferase RimO (440 aa).

The 117-residue stretch at 2 to 118 folds into the MTTase N-terminal domain; that stretch reads KKAGIIHLGC…FVSLITSNGE (117 aa). Positions 11, 47, 81, 154, 158, and 161 each coordinate [4Fe-4S] cluster. In terms of domain architecture, Radical SAM core spans 140–370; that stretch reads ISPNFWVYVK…MSTQKEISKK (231 aa). Residues 373-440 enclose the TRAM domain; it reads AKLLGREFDV…RAYDLLGELV (68 aa).

It belongs to the methylthiotransferase family. RimO subfamily. It depends on [4Fe-4S] cluster as a cofactor.

It localises to the cytoplasm. It catalyses the reaction L-aspartate(89)-[ribosomal protein uS12]-hydrogen + (sulfur carrier)-SH + AH2 + 2 S-adenosyl-L-methionine = 3-methylsulfanyl-L-aspartate(89)-[ribosomal protein uS12]-hydrogen + (sulfur carrier)-H + 5'-deoxyadenosine + L-methionine + A + S-adenosyl-L-homocysteine + 2 H(+). Catalyzes the methylthiolation of an aspartic acid residue of ribosomal protein uS12. The chain is Ribosomal protein uS12 methylthiotransferase RimO from Dictyoglomus thermophilum (strain ATCC 35947 / DSM 3960 / H-6-12).